Reading from the N-terminus, the 105-residue chain is uncharacterized protein (105 aa).

The protein localises to the plastid. This is an uncharacterized protein from Euglena longa (Euglenophycean alga).